The sequence spans 725 residues: MSEDTVPEAASPPPSQGQHYFDRFSEDDPEYLRLRNRAADLRQDFNLMEQKKRVTMILQSPSFREELEGLIQEQMKKGNNSSNIWALRQIADFMASTSHAVFPASSMNFSMMTPINDLHTADSLNLAKGERLMRCKISSVYRLLDLYGWAQLSDTYVTLRVSKEQDHFLISPKGVSCSEVTASSLIKVNILGEVVEKGSSCFPVDTTGFSLHSAIYAARPDVRCAIHLHTPATAAVSAMKCGLLPVSHNALLVGDMAYYDFNGEMEQEADRINLQKCLGPTCKILVLRNHGMVALGDTVEEAFYKVFHLQAACEVQVSALSSAGGTENLILLEQEKHRPHEVGSVQWAGSTFGPMQKSRLGEHEFEALMRMLDNLGYRTGYTYRHPFVQEKTKHKSEVEIPATVTAFVFEEDGVPVPALRQHAQKQQKEKTRWLNTPNTYLRVNVADEVQRNMGSPRPKTTWMKADEVEKSSSGMPIRIENPNQFVPLYTDPQEVLDMRNKIREQNRQDIKSAGPQSQLLASVIAEKSRSPSTESQLASKGDADTKDELEETVPNPFSQLTDQELEEYKKEVERKKLEQEQEGEKDAATEEPGSPVKSTPASPVQSPTRAGTKSPAVSPSKASEDAKKTEVSEANTEPEPEKPEGVVVNGKEEEPCVEEVLSKGPGQMTTNADTDGDSYKDKTESVTSGPLSPEGSPSKSPSKKKKKFRTPSFLKKSKKKEKVES.

Residues 1 to 22 are disordered; it reads MSEDTVPEAASPPPSQGQHYFD. 2 positions are modified to phosphoserine: S11 and S25. A Phosphothreonine modification is found at T55. A phosphoserine mark is found at S60 and S344. Residues 425–444 are interaction with calmodulin; it reads KQQKEKTRWLNTPNTYLRVN. The disordered stretch occupies residues 525 to 725; sequence AEKSRSPSTE…KSKKKEKVES (201 aa). 2 positions are modified to phosphoserine: S530 and S532. T533 is modified (phosphothreonine). Residue S535 is modified to Phosphoserine. Phosphothreonine is present on T561. The span at 566–588 shows a compositional bias: basic and acidic residues; it reads EEYKKEVERKKLEQEQEGEKDAA. Phosphoserine occurs at positions 594, 598, 602, and 606. A compositionally biased stretch (polar residues) spans 596 to 621; it reads VKSTPASPVQSPTRAGTKSPAVSPSK. T612 bears the Phosphothreonine mark. Phosphoserine occurs at positions 614, 618, and 620. Basic and acidic residues-rich tracts occupy residues 622 to 631 and 639 to 654; these read ASEDAKKTEV and EPEK…KEEE. T674 carries the phosphothreonine modification. 9 positions are modified to phosphoserine: S678, S685, S688, S692, S696, S698, S700, S702, and S712. Over residues 687 to 700 the composition is skewed to low complexity; that stretch reads TSGPLSPEGSPSKS. Over residues 701–725 the composition is skewed to basic residues; sequence PSKKKKKFRTPSFLKKSKKKEKVES. The interaction with calmodulin stretch occupies residues 703 to 720; that stretch reads KKKKKFRTPSFLKKSKKK.

Belongs to the aldolase class II family. Adducin subfamily. In terms of assembly, heterodimer of an alpha and a beta subunit. Found in a complex with ADD2, DMTN and SLC2A1. Interacts with SLC2A1. As to expression, found in liver, kidney, spleen, heart and brain.

It is found in the cytoplasm. Its subcellular location is the cytoskeleton. The protein localises to the cell membrane. Its function is as follows. Membrane-cytoskeleton-associated protein that promotes the assembly of the spectrin-actin network. Binds to the erythrocyte membrane receptor SLC2A1/GLUT1 and may therefore provide a link between the spectrin cytoskeleton to the plasma membrane. Binds to calmodulin. Calmodulin binds preferentially to the beta subunit. In Rattus norvegicus (Rat), this protein is Beta-adducin (Add2).